Consider the following 913-residue polypeptide: Valine--tRNA ligase (913 aa).

The short motif at 48–58 (PNVTGSLHMGH) is the 'HIGH' region element. The short motif at 541 to 545 (KMSKS) is the 'KMSKS' region element. Lysine 544 contacts ATP. Positions 839 to 907 (VVDLEALVSK…IEHRLQSLGV (69 aa)) form a coiled coil.

This sequence belongs to the class-I aminoacyl-tRNA synthetase family. ValS type 1 subfamily. As to quaternary structure, monomer.

It localises to the cytoplasm. It carries out the reaction tRNA(Val) + L-valine + ATP = L-valyl-tRNA(Val) + AMP + diphosphate. In terms of biological role, catalyzes the attachment of valine to tRNA(Val). As ValRS can inadvertently accommodate and process structurally similar amino acids such as threonine, to avoid such errors, it has a 'posttransfer' editing activity that hydrolyzes mischarged Thr-tRNA(Val) in a tRNA-dependent manner. The sequence is that of Valine--tRNA ligase from Thermosynechococcus vestitus (strain NIES-2133 / IAM M-273 / BP-1).